The following is a 308-amino-acid chain: Alpha/beta hydrolase domain-containing protein WAV2 (308 aa).

Residues 6–26 (SALFYGFGGIVVAGVALLVAF) traverse the membrane as a helical segment. Catalysis depends on charge relay system residues Ser-159, Asp-243, and Arg-308.

It belongs to the serine esterase family. Expressed in roots, rosette leaves, stems and flowers.

The protein resides in the cell membrane. In terms of biological role, involved in the regulation of root growth. Involved in the suppression of the root bending in response to touch stimuli, gravity and light. Negatively regulates stimulus-induced root bending through inhibition of root tip rotation. In Arabidopsis thaliana (Mouse-ear cress), this protein is Alpha/beta hydrolase domain-containing protein WAV2.